Consider the following 471-residue polypeptide: MASKTFDAGVQDYQLTYWTPDYTPLDTDLLACFKVVPQEGVPREEAAAAVAAESSTGTWTTVWTDLLTDMEFFKGRAYRIEDVPGDKNAFYAFIAYPLDLFEEGSVVNVLTSLVGNVFGFKAVRSLRLEDLRFPIAFIKTCGGPPSGIQVERDKLNKYGRPMLGCTIKPKLGLSAKNYGRAVYECLRGGLDLTKDDENINSQPFQRWRDRFEFVAEAVDKATAETGERKGHYLNVTAGTVEEMMKRAEFAKELGQPIIMHDFLTAGFTANTTLANWCRENGMLLHIHRAMHAVIDRNPLHGIHFRVLAKCLRLSGGDHLHTGTVVGKLEGDRASTLGFVDQLRESFVPEDRSRGVFFDQDWGSMPGVMAVASGGIHVWHMPALVNIFGDDSVLQFGGGTQGHPGGNAAGAAANRVALEACVKARNEGRDLEREGGDILREAARTSKELAVALETWKEIKFEFDTVDKLDVQ.

2 residues coordinate substrate: Asn116 and Thr166. Lys168 serves as the catalytic Proton acceptor. Residue Lys170 coordinates substrate. Mg(2+) contacts are provided by Lys194, Asp196, and Glu197. Lys194 is subject to N6-carboxylysine. Catalysis depends on His287, which acts as the Proton acceptor. Substrate is bound by residues Arg288, His320, and Ser372.

This sequence belongs to the RuBisCO large chain family. Type I subfamily. As to quaternary structure, heterohexadecamer of 8 large chains and 8 small chains. Requires Mg(2+) as cofactor.

The protein resides in the carboxysome. The catalysed reaction is 2 (2R)-3-phosphoglycerate + 2 H(+) = D-ribulose 1,5-bisphosphate + CO2 + H2O. The enzyme catalyses D-ribulose 1,5-bisphosphate + O2 = 2-phosphoglycolate + (2R)-3-phosphoglycerate + 2 H(+). In terms of biological role, ruBisCO catalyzes two reactions: the carboxylation of D-ribulose 1,5-bisphosphate, the primary event in carbon dioxide fixation, as well as the oxidative fragmentation of the pentose substrate. Both reactions occur simultaneously and in competition at the same active site. The protein is Ribulose bisphosphate carboxylase large chain 2 of Hydrogenovibrio marinus.